The sequence spans 824 residues: Ras guanine nucleotide exchange factor I (824 aa).

Disordered stretches follow at residues 1-51 (MSNP…KPTK) and 65-167 (GSNL…LILD). Residues 8–41 (SNSTNGSSNSLNGESVSPNRLGSSPGSPISKASS) are compositionally biased toward low complexity. Polar residues predominate over residues 83-95 (NSSVGLLNNSTGS). The span at 104–116 (SSPKSSYILSSSI) shows a compositional bias: low complexity. The segment covering 117–128 (GSGGSGGGGGSS) has biased composition (gly residues). Residues 136 to 167 (SASNNSSGPRSRSGSLGKNNSSQQNNNNLILD) show a composition bias toward low complexity. A LisH domain is found at 223-255 (GRDNILQLILQHLQFEGLMDSRKILEEEAKIQY). Disordered stretches follow at residues 330-354 (YVDE…TTAT) and 398-425 (NTQQ…STGT). A compositionally biased stretch (basic and acidic residues) spans 331-341 (VDEKDNDKPSK). Over residues 343 to 354 (SPTTATTTTTAT) the composition is skewed to low complexity. Over residues 413–425 (LKSTQSITGSTGT) the composition is skewed to polar residues. Residues 426-551 (LGPQVKAASL…VISDALNSGL (126 aa)) enclose the N-terminal Ras-GEF domain. The region spanning 585–816 (DEEEISRQLT…YTRSMSFEPR (232 aa)) is the Ras-GEF domain.

Functionally, promotes the exchange of Ras-bound GDP by GTP. This Dictyostelium discoideum (Social amoeba) protein is Ras guanine nucleotide exchange factor I (gefI).